Consider the following 422-residue polypeptide: Zinc finger protein Gfi-1 (422 aa).

Positions M1 to S20 are SNAG domain. Residues M1 to P107 are disordered. Phosphoserine is present on S20. Positions A34–A47 are enriched in low complexity. Phosphoserine is present on S56. The span at P57 to P72 shows a compositional bias: polar residues. The segment at R140–C257 is required for interaction with RELA. 6 consecutive C2H2-type zinc fingers follow at residues Y255–H278, F284–H306, F312–H334, Y340–H362, H368–H390, and F396–H419.

Interacts with U2AF1L4. Component of RCOR-GFI-KDM1A-HDAC complexes. Interacts directly with RCOR1, KDM1A and HDAC2. Also interacts with HDAC1 and HDAC3. Interacts (via the zinc-finger domain) with ARIH2; the interaction prevents GFI1 ubiquitination and proteasomal degradation. Interacts with PIAS3; the interaction relieves the inhibitory effect of PIAS3 on STAT3-mediated transcriptional activity. Forms a complex with EHMT2 and HDAC1 to promote 'Lys-9' dimethylation of H3 (H3K9Me2) and repress expression of target genes. Interacts directly with EHMT2. Component of the GFI1-AJUBA-HDAC1 repressor complex. Interacts directly with AJUBA (via ITS LIM domains); the interaction results in the HDAC-dependent corepression of a subset of GFI1 target genes and, occurs independently of the SNAG domain. Interacts with SPI1; the interaction inhibits SPI1 transcriptional activity targeted at macrophage-specific genes, repressing macrophage differentiation of myeloid progenitor cells and promoting granulocyte commitment. Interacts with RUNX1T1; the interaction represses HDAC-mediated transcriptional activity. Interacts with RELA; the interaction occurs on liposaccharide (LPS) stimulation and controls RELA DNA binding activity and regulates endotoxin-mediated TOLL-like receptor inflammatory response. Interacts (via the C-terminal zinc fingers) with ZBTB17; the interaction results in the recruitment of GFI1 to the CDKN1A/p21 and CDKNIB promoters and repression of transcription. Ubiquitinated.

It is found in the nucleus. Transcription repressor essential for hematopoiesis. Functions in a cell-context and development-specific manner. Binds to 5'-TAAATCAC[AT]GCA-3' in the promoter region of a large number of genes. Component of several complexes, including the EHMT2-GFI1-HDAC1, AJUBA-GFI1-HDAC1 and RCOR-GFI-KDM1A-HDAC complexes, that suppress, via histone deacetylase (HDAC) recruitment, a number of genes implicated in multilineage blood cell development. Regulates neutrophil differentiation, promotes proliferation of lymphoid cells, and is required for granulocyte development. Inhibits SPI1 transcriptional activity at macrophage-specific genes, repressing macrophage differentiation of myeloid progenitor cells and promoting granulocyte commitment. Mediates, together with U2AF1L4, the alternative splicing of CD45 and controls T-cell receptor signaling. Regulates the endotoxin-mediated Toll-like receptor (TLR) inflammatory response by antagonizing RELA. Cooperates with CBFA2T2 to regulate ITGB1-dependent neurite growth. Controls cell-cycle progression by repressing CDKNIA/p21 transcription in response to TGFB1 via recruitment of GFI1 by ZBTB17 to the CDKNIA/p21 and CDKNIB promoters. Required for the maintenance of inner ear hair cells. In addition to its role in transcription, acts as a substrate adapter for PRMT1 in the DNA damage response: facilitates the recognition of TP53BP1 and MRE11 substrates by PRMT1, promoting their methylation and the DNA damage response. This is Zinc finger protein Gfi-1 (GFI1) from Canis lupus familiaris (Dog).